The primary structure comprises 109 residues: Flagellar hook-basal body complex protein FliE (109 aa).

The protein belongs to the FliE family.

The protein resides in the bacterial flagellum basal body. The chain is Flagellar hook-basal body complex protein FliE from Pseudomonas syringae pv. tomato (strain ATCC BAA-871 / DC3000).